The primary structure comprises 312 residues: Malate dehydrogenase (312 aa).

Residues 7-13 (GAAGGIG) and D34 contribute to the NAD(+) site. The substrate site is built by R81 and R87. NAD(+) contacts are provided by residues N94 and 117-119 (ITN). Residues N119 and R153 each contribute to the substrate site. H177 serves as the catalytic Proton acceptor. M227 is a binding site for NAD(+).

The protein belongs to the LDH/MDH superfamily. MDH type 1 family. Homodimer.

It catalyses the reaction (S)-malate + NAD(+) = oxaloacetate + NADH + H(+). Its function is as follows. Catalyzes the reversible oxidation of malate to oxaloacetate. This is Malate dehydrogenase from Salmonella arizonae (strain ATCC BAA-731 / CDC346-86 / RSK2980).